Reading from the N-terminus, the 257-residue chain is 3-dehydroquinate dehydratase (257 aa).

3-dehydroquinate contacts are provided by residues 50-52 (EWR) and arginine 86. The Proton donor/acceptor role is filled by histidine 147. Lysine 174 functions as the Schiff-base intermediate with substrate in the catalytic mechanism. Positions 216, 235, and 239 each coordinate 3-dehydroquinate.

The protein belongs to the type-I 3-dehydroquinase family. In terms of assembly, homodimer.

The enzyme catalyses 3-dehydroquinate = 3-dehydroshikimate + H2O. Its pathway is metabolic intermediate biosynthesis; chorismate biosynthesis; chorismate from D-erythrose 4-phosphate and phosphoenolpyruvate: step 3/7. Involved in the third step of the chorismate pathway, which leads to the biosynthesis of aromatic amino acids. Catalyzes the cis-dehydration of 3-dehydroquinate (DHQ) and introduces the first double bond of the aromatic ring to yield 3-dehydroshikimate. The polypeptide is 3-dehydroquinate dehydratase (Geobacillus thermodenitrificans (strain NG80-2)).